The chain runs to 331 residues: MKIPLITEIQRFSLQDGPGIRTTIFLKGCPLRCPWCHNPETQDARQEFYFYPDRCVGCGRCVAVCPAETSRLVRNSDGRTIVQIDRTNCQRCMRCVAACLTEARAIVGQHMSVDEILREALSDSAFYRNSGGGVTISGGDPLYFPDFTRQLASELHARGVHVAIETSCFPKQGKVVESMIGIVDLFIVDLKTLDAHKHLDVIGWPLAPILANLETLFAAGAKVRIHIPVIPGFNDSHADIDAYAEYLGKHAAAISGIDLLNFHCYGEGKYTFLGRAGSYQYSGVDETPAEKIVPLAQALKARGLAVTIGGIVGIANGKNELTGDIALEVHH.

Residues 15-315 form the Radical SAM core domain; it reads QDGPGIRTTI…VTIGGIVGIA (301 aa). Residues cysteine 29, cysteine 33, cysteine 36, cysteine 55, cysteine 58, cysteine 61, cysteine 65, cysteine 89, cysteine 92, cysteine 95, and cysteine 99 each coordinate [4Fe-4S] cluster. 35-37 lines the S-adenosyl-L-methionine pocket; sequence WCH. 4Fe-4S ferredoxin-type domains lie at 46-75 and 80-109; these read QEFYFYPDRCVGCGRCVAVCPAETSRLVRN and TIVQIDRTNCQRCMRCVAACLTEARAIVGQ. S-adenosyl-L-methionine-binding positions include glycine 139, 189–191, and histidine 263; that span reads DLK.

The protein belongs to the organic radical-activating enzymes family. The cofactor is [4Fe-4S] cluster.

It carries out the reaction glycyl-[protein] + reduced [flavodoxin] + S-adenosyl-L-methionine = glycin-2-yl radical-[protein] + semiquinone [flavodoxin] + 5'-deoxyadenosine + L-methionine + H(+). It functions in the pathway xenobiotic degradation; toluene degradation [regulation]. Its function is as follows. Activation of benzylsuccinate synthase under anaerobic conditions by generation of an organic free radical, using S-adenosylmethionine and reduced flavodoxin as cosubstrates to produce 5'-deoxy-adenosine. The polypeptide is Benzylsuccinate synthase activating enzyme (bssD) (Thauera aromatica).